A 471-amino-acid chain; its full sequence is Nuclear distribution protein PAC1 (471 aa).

The LisH domain maps to 9–41; the sequence is QAEELHKSMIAYLLSVNLSKSAAALREELADSV. Residues 60–87 adopt a coiled-coil conformation; sequence TSVVRLQKKIMDLESRNAALQQELDSAT. Positions 83-93 are enriched in polar residues; sequence LDSATPTSLSR. The tract at residues 83 to 108 is disordered; the sequence is LDSATPTSLSRRNQDPASWLPRAPAR. WD repeat units follow at residues 113–154, 156–196, 200–247, 250–289, 292–352, 354–393, 398–428, and 429–467; these read SHRG…RTIK, HTRA…KNIR, GHDH…CVKT, GHLDWVRDVFPSPDGRFLMSGGDDRVPRLLDASSGETKST, GHEH…IKTL, GHDNWIRALVFHPGGKYLLSVSDDKTLRCWDLSQECKCVR, AHGHFVSCIRWAPNIINESGLVSGEGGINGQ, and GTPSMNGVSISTTSKKEDTGGGGKIRCVIATGSVDMNVR. Positions 424 to 449 are disordered; it reads GINGQGTPSMNGVSISTTSKKEDTGG. Residues 428 to 441 show a composition bias toward polar residues; the sequence is QGTPSMNGVSISTT.

It belongs to the WD repeat LIS1/nudF family. As to quaternary structure, self-associates. Interacts with NDL1 and dynein.

Its subcellular location is the cytoplasm. It localises to the cytoskeleton. The protein localises to the spindle pole. Positively regulates the activity of the minus-end directed microtubule motor protein dynein. May enhance dynein-mediated microtubule sliding by targeting dynein to the microtubule plus end. Required for nuclear migration during vegetative growth as well as development. Required for retrograde early endosome (EE) transport from the hyphal tip. Required for localization of dynein to the mitotic spindle poles. Recruits additional proteins to the dynein complex at SPBs. The sequence is that of Nuclear distribution protein PAC1 from Coccidioides posadasii (strain C735) (Valley fever fungus).